A 213-amino-acid chain; its full sequence is NADH dehydrogenase [ubiquinone] iron-sulfur protein 7, mitochondrial (213 aa).

The N-terminal 38 residues, 1 to 38 (MAALSAPGLCGFRILGLRSSVGTAVQARGVHQSVATDG), are a transit peptide targeting the mitochondrion. The tract at residues 32–53 (QSVATDGPSSTQPALPKARAVA) is disordered. Over residues 33–44 (SVATDGPSSTQP) the composition is skewed to polar residues. Cys88 and Cys89 together coordinate [4Fe-4S] cluster. Arg111 bears the Hydroxyarginine mark. [4Fe-4S] cluster contacts are provided by Cys153 and Cys183.

This sequence belongs to the complex I 20 kDa subunit family. As to quaternary structure, core subunit of respiratory chain NADH dehydrogenase (Complex I) which is composed of 45 different subunits. This is a component of the iron-sulfur (IP) fragment of the enzyme. Requires [4Fe-4S] cluster as cofactor. In terms of processing, hydroxylated ar Arg-111 by NDUFAF5 early in the pathway of assembly of complex I, before the formation of the juncture between peripheral and membrane arms.

Its subcellular location is the mitochondrion inner membrane. It carries out the reaction a ubiquinone + NADH + 5 H(+)(in) = a ubiquinol + NAD(+) + 4 H(+)(out). Its function is as follows. Core subunit of the mitochondrial membrane respiratory chain NADH dehydrogenase (Complex I) which catalyzes electron transfer from NADH through the respiratory chain, using ubiquinone as an electron acceptor. Essential for the catalytic activity of complex I. The chain is NADH dehydrogenase [ubiquinone] iron-sulfur protein 7, mitochondrial (NDUFS7) from Gorilla gorilla gorilla (Western lowland gorilla).